The chain runs to 90 residues: UPF0512 protein L (90 aa).

This sequence belongs to the UPF0512 family.

This Dictyostelium discoideum (Social amoeba) protein is UPF0512 protein L.